A 718-amino-acid chain; its full sequence is DNA ligase (718 aa).

NAD(+)-binding positions include 44 to 48 (DADYD), 93 to 94 (SL), and glutamate 127. Lysine 129 (N6-AMP-lysine intermediate) is an active-site residue. NAD(+) is bound by residues arginine 150, glutamate 186, lysine 302, and lysine 326. Residues cysteine 432, cysteine 435, cysteine 456, and cysteine 462 each contribute to the Zn(2+) site. Residues 640–718 (TAGSPVAGKT…EDEWLALISG (79 aa)) enclose the BRCT domain.

The protein belongs to the NAD-dependent DNA ligase family. LigA subfamily. Mg(2+) serves as cofactor. Requires Mn(2+) as cofactor.

The enzyme catalyses NAD(+) + (deoxyribonucleotide)n-3'-hydroxyl + 5'-phospho-(deoxyribonucleotide)m = (deoxyribonucleotide)n+m + AMP + beta-nicotinamide D-nucleotide.. Functionally, DNA ligase that catalyzes the formation of phosphodiester linkages between 5'-phosphoryl and 3'-hydroxyl groups in double-stranded DNA using NAD as a coenzyme and as the energy source for the reaction. It is essential for DNA replication and repair of damaged DNA. The protein is DNA ligase of Rhizobium etli (strain ATCC 51251 / DSM 11541 / JCM 21823 / NBRC 15573 / CFN 42).